The sequence spans 238 residues: uncharacterized protein (238 aa).

Positions 1-10 are enriched in basic residues; it reads MARGQNIRKR. Disordered stretches follow at residues 1–26 and 195–238; these read MARGQNIRKRTFSDMDTPSDKNIGIH and LNTS…YDSF.

Belongs to the asfivirus DP238L family.

This is an uncharacterized protein from Ornithodoros (relapsing fever ticks).